We begin with the raw amino-acid sequence, 73 residues long: Putative sulfur carrier protein AF_0556 (73 aa).

Cys11 acts as the Cysteine persulfide intermediate in catalysis.

Belongs to the sulfur carrier protein TusA family.

The protein is Putative sulfur carrier protein AF_0556 of Archaeoglobus fulgidus (strain ATCC 49558 / DSM 4304 / JCM 9628 / NBRC 100126 / VC-16).